The following is a 483-amino-acid chain: MTGKATSEASVSTPEETAPEPAKVPTTEPSGEVAASESTGQEQAPEPQKPQAQDPAAPAASAMPAATKPEPPSEDVPSAPLRLTLEDVSHSSLTVSWEPPEKLGKLGLQGYVLEFCREGASEWVPVNPRPVMVTQQTVRNLALGDKFFLRVTAVSSAGAGPPAVLDQPVHIQEITEAPKIRVPRHLRQTYIRQVGESVNLQIPFQGKPKPQVSWTHNGHALDNQRVNVRSGDQDSILFIRSAQRADSGRYELTVHLEGLEAKASIDILVIEKPGPPSSIKLLDVWGCNAALEWTPPQDTGNTELLGYTVQKADKRTGQWFTVLERYHPTTCTISDLIIGNSYSFRVFSENLCGLSDLATTTKELAHIHKADITAKPREFIERDFSEAPSFTQPLADHTSTPGYSTQLFCSVRASPKPKIIWMKNKMDIQGDPKYRAVSEQGVCTLEIRKPSPFDSGVYTCKAINVLGEASVDCRLEVKASATH.

Residues 1-15 (MTGKATSEASVSTPE) are compositionally biased toward polar residues. A disordered region spans residues 1-78 (MTGKATSEAS…PEPPSEDVPS (78 aa)). Phosphothreonine occurs at positions 2, 6, and 26. A compositionally biased stretch (low complexity) spans 41-66 (QEQAPEPQKPQAQDPAAPAASAMPAA). Positions 79-174 (APLRLTLEDV…LDQPVHIQEI (96 aa)) constitute a Fibronectin type-III 1 domain. The 89-residue stretch at 178–266 (PKIRVPRHLR…EGLEAKASID (89 aa)) folds into the Ig-like C2-type 1 domain. One can recognise a Fibronectin type-III 2 domain in the interval 275–370 (PPSSIKLLDV…TKELAHIHKA (96 aa)). Residues 388–472 (PSFTQPLADH…INVLGEASVD (85 aa)) form the Ig-like C2-type 2 domain.

It belongs to the immunoglobulin superfamily. MyBP family. As to expression, skeletal muscle. Expressed at low levels in heart ventricles.

Binds to myosin; probably involved in interaction with thick myofilaments in the A-band. This Mus musculus (Mouse) protein is Myosin-binding protein H (Mybph).